We begin with the raw amino-acid sequence, 1477 residues long: MGTALLQRGGCFLLCLSLLLLGCWAELGSGLEFPGAEGQWTRFPKWNACCESEMSFQLKTRSARGLVLYFDDEGFCDFLELILTRGGRLQLSFSIFCAEPATLLADTPVNDGAWHSVRIRRQFRNTTLFIDQVEAKWVEVKSKRRDMTVFSGLFVGGLPPELRAAALKLTLASVREREPFKGWIRDVRVNSSQVLPVDSGEVKLDDEPPNSGGGSPCEAGEEGEGGVCLNGGVCSVVDDQAVCDCSRTGFRGKDCSQEDNNVEGLAHLMMGDQGKSKGKEEYIATFKGSEYFCYDLSQNPIQSSSDEITLSFKTLQRNGLMLHTGKSADYVNLALKNGAVSLVINLGSGAFEALVEPVNGKFNDNAWHDVKVTRNLRQHSGIGHAMVTISVDGILTTTGYTQEDYTMLGSDDFFYVGGSPSTADLPGSPVSNNFMGCLKEVVYKNNDVRLELSRLAKQGDPKMKIHGVVAFKCENVATLDPITFETPESFISLPKWNAKKTGSISFDFRTTEPNGLILFSHGKPRHQKDAKHPQMIKVDFFAIEMLDGHLYLLLDMGSGTIKIKALLKKVNDGEWYHVDFQRDGRSGTISVNTLRTPYTAPGESEILDLDDELYLGGLPENKAGLVFPTEVWTALLNYGYVGCIRDLFIDGQSKDIRQMAEVQSTAGVKPSCSKETAKPCLSNPCKNNGMCRDGWNRYVCDCSGTGYLGRSCEREATVLSYDGSMFMKIQLPVVMHTEAEDVSLRFRSQRAYGILMATTSRDSADTLRLELDAGRVKLTVNLDCIRINCNSSKGPETLFAGYNLNDNEWHTVRVVRRGKSLKLTVDDQQAMTGQMAGDHTRLEFHNIETGIITERRYLSSVPSNFIGHLQSLTFNGMAYIDLCKNGDIDYCELNARFGFRNIIADPVTFKTKSSYVALATLQAYTSMHLFFQFKTTSLDGLILYNSGDGNDFIVVELVKGYLHYVFDLGNGANLIKGSSNKPLNDNQWHNVMISRDTSNLHTVKIDTKITTQITAGARNLDLKSDLYIGGVAKETYKSLPKLVHAKEGFQGCLASVDLNGRLPDLISDALFCNGQIERGCEGPSTTCQEDSCSNQGVCLQQWDGFSCDCSMTSFSGPLCNDPGTTYIFSKGGGQITYKWPPNDRPSTRADRLAIGFSTVQKEAVLVRVDSSSGLGDYLELHIHQGKIGVKFNVGTDDIAIEESNAIINDGKYHVVRFTRSGGNATLQVDSWPVIERYPAGRQLTIFNSQATIIIGGKEQGQPFQGQLSGLYYNGLKVLNMAAENDANIAIVGNVRLVGEVPSSMTTESTATAMQSEMSTSIMETTTTLATSTARRGKPPTKEPISQTTDDILVASAECPSDDEDIDPCEPSSGGLANPTRAGGREPYPGSAEVIRESSSTTGMVVGIVAAAALCILILLYAMYKYRNRDEGSYHVDESRNYISNSAQSNGAVVKEKQPSSAKSSNKNKKNKDKEYYV.

The first 30 residues, 1–30 (MGTALLQRGGCFLLCLSLLLLGCWAELGSG), serve as a signal peptide directing secretion. The Laminin G-like 1 domain occupies 31–217 (LEFPGAEGQW…PPNSGGGSPC (187 aa)). Residues 31–1401 (LEFPGAEGQW…EVIRESSSTT (1371 aa)) are Extracellular-facing. Residues Asn125 and Asn190 are each glycosylated (N-linked (GlcNAc...) asparagine). Positions 198-221 (DSGEVKLDDEPPNSGGGSPCEAGE) are disordered. The EGF-like 1 domain maps to 213–256 (GGSPCEAGEEGEGGVCLNGGVCSVVDDQAVCDCSRTGFRGKDCS). 2 disulfide bridges follow: Cys228-Cys243 and Cys245-Cys255. Laminin G-like domains follow at residues 283 to 473 (IATF…AFKC) and 480 to 672 (DPIT…KPSC). The Ca(2+) site is built by Asp329, Leu346, and Met407. 5 disulfides stabilise this stretch: Cys437–Cys473, Cys643–Cys672, Cys680–Cys691, Cys685–Cys700, and Cys702–Cys712. The EGF-like 2 domain occupies 676–713 (TAKPCLSNPCKNNGMCRDGWNRYVCDCSGTGYLGRSCE). Laminin G-like domains are found at residues 718-891 (VLSY…IDYC) and 905-1080 (DPVT…ERGC). Residues Asp765 and Leu782 each coordinate Ca(2+). N-linked (GlcNAc...) asparagine glycosylation is present at Asn790. Arg841 contributes to the Ca(2+) binding site. Disulfide bonds link Cys883–Cys891, Cys1052–Cys1080, Cys1087–Cys1098, Cys1092–Cys1107, and Cys1109–Cys1119. Residues 1083–1120 (PSTTCQEDSCSNQGVCLQQWDGFSCDCSMTSFSGPLCN) enclose the EGF-like 3 domain. Positions 1126-1294 (YIFSKGGGQI…DANIAIVGNV (169 aa)) constitute a Laminin G-like 6 domain. Asp1176 and Val1193 together coordinate Ca(2+). Asn1223 carries an N-linked (GlcNAc...) asparagine glycan. The Ca(2+) site is built by Ile1245 and Asn1247. Positions 1325-1390 (TTTLATSTAR…AGGREPYPGS (66 aa)) are disordered. An O-linked (Xyl...) (heparan sulfate) serine glycan is attached at Ser1355. A helical membrane pass occupies residues 1402-1422 (GMVVGIVAAAALCILILLYAM). Residues 1423–1477 (YKYRNRDEGSYHVDESRNYISNSAQSNGAVVKEKQPSSAKSSNKNKKNKDKEYYV) lie on the Cytoplasmic side of the membrane. The tract at residues 1444–1470 (NSAQSNGAVVKEKQPSSAKSSNKNKKN) is interaction with CASK. Positions 1444–1477 (NSAQSNGAVVKEKQPSSAKSSNKNKKNKDKEYYV) are disordered.

This sequence belongs to the neurexin family. Interacts (via laminin G-like domain 2 and/or laminin G-like domain 6) with NLGN1 forming a heterotetramer, where one NLGN1 dimer interacts with one NRXN1 dimer. Also interacts (via laminin G-like domain 2 and/or laminin G-like domain 6) with NLGN2, NLGN3 and NLGN4L; interactions with NLGN1, NLGN2, NLGN3 and NLGN4L are calcium-dependent. Interacts (via cytoplasmic C-terminal region) with CASK (via the PDZ, SH3 and guanylate kinase-like domains). Interacts (via cytoplasmic C-terminus) with CASKIN1 and APBA1. Interacts (via laminin G-like domain 2) with NXPH1 and NXPH3. Alpha-type isoforms (neurexin-1-alpha) interact (via laminin G-like domain 2 and/or laminin G-like domain 6) with DAG1 (via alpha-dystroglycan chain). Interacts with LRRTM1, LRRTM2, LRRTM3 and LRRTM4. Interacts with SYT13 and SYTL1. Interacts with CBLN1, CBLN2 and, less avidly, with CBLN4. Interacts with CLSTN3. Post-translationally, O-glycosylated; contains heparan sulfate. Heparan sulfate attachment is required for synapse development by mediating interactions with neuroligins and LRRTM2. As to expression, brain.

It is found in the presynaptic cell membrane. Its function is as follows. Cell surface protein involved in cell-cell-interactions, exocytosis of secretory granules and regulation of signal transmission. Function is isoform-specific. Alpha-type isoforms have a long N-terminus with six laminin G-like domains and play an important role in synaptic signal transmission. Alpha-type isoforms play a role in the regulation of calcium channel activity and Ca(2+)-triggered neurotransmitter release at synapses and at neuromuscular junctions. They play an important role in Ca(2+)-triggered exocytosis of secretory granules in pituitary gland. They may affect their functions at synapses and in endocrine cells via their interactions with proteins from the exocytotic machinery. Likewise, alpha-type isoforms play a role in regulating the activity of postsynaptic NMDA receptors, a subtype of glutamate-gated ion channels. Both alpha-type and beta-type isoforms may play a role in the formation or maintenance of synaptic junctions via their interactions (via the extracellular domains) with neuroligin family members, CBLN1 or CBLN2. In vitro, triggers the de novo formation of presynaptic structures. May be involved in specification of excitatory synapses. Alpha-type isoforms were first identified as receptors for alpha-latrotoxin from spider venom. The polypeptide is Neurexin-1 (NRXN1) (Homo sapiens (Human)).